The primary structure comprises 509 residues: MKKYQRYLELDRSQQQNFLYPLIFREYIYGLAPSHDLNRNRYILSENVDYDKNSSLLIVKRLITRIYQQNHLILFDNDSSKNQFWGYNKNLYSQIISEGFAIVMEIPFSRQLSSSLEEAGIVKSFNNLESIHSIFSFFEDKFTYLKFFSDVRIPYPIHLEILVQTXXXXXXXXPLLHLLRLFLYEYCNWTSLITQKKIIFTFSKSNPRFFLFLYNFYVCEHESIFLFLRKKSSHLRLNSFSVFFERIYFYTKLEHLVEVFSKNFSSTLSFFKDPLIHYVRYQGKSIFASKNAPFLMNKWKYYFIYFWQCYFDIWSQPRMIQINELFENSFHFFWGGYLSNVRLNFSVVRSQMLEDSFLIEIVMKKLDTIVPIIPLIRSLAKAKFCNRLGHPISKPVWTDSSDFDIIDRYLRICRNLSHYYNGSSKKSLYRIKYIIRLSCIKTLARKHKRTLRAFLKRLDSEELLEEFFTEEEEILSLIFPRSSATLRRLYRSRIWYLDILFSNDTINVN.

This sequence belongs to the intron maturase 2 family. MatK subfamily.

The protein localises to the plastid. It is found in the chloroplast. Functionally, usually encoded in the trnK tRNA gene intron. Probably assists in splicing its own and other chloroplast group II introns. The polypeptide is Maturase K (Stylosanthes hamata (Caribbean stylo)).